Reading from the N-terminus, the 299-residue chain is Hemolysin C homolog (299 aa).

CBS domains are found at residues 80–142 (MVPR…NGRL) and 145–202 (LIRK…IDDE).

Belongs to the UPF0053 family. Hemolysin C subfamily.

In Rickettsia massiliae (strain Mtu5), this protein is Hemolysin C homolog (tlyC).